A 123-amino-acid chain; its full sequence is Small ribosomal subunit protein uS13 (123 aa).

A disordered region spans residues 94-123 (GLPVRGQSTKSNARTRKGPRKTVAGKKSTK). Residues 106 to 123 (ARTRKGPRKTVAGKKSTK) show a composition bias toward basic residues.

The protein belongs to the universal ribosomal protein uS13 family. As to quaternary structure, part of the 30S ribosomal subunit. Forms a loose heterodimer with protein S19. Forms two bridges to the 50S subunit in the 70S ribosome.

Located at the top of the head of the 30S subunit, it contacts several helices of the 16S rRNA. In the 70S ribosome it contacts the 23S rRNA (bridge B1a) and protein L5 of the 50S subunit (bridge B1b), connecting the 2 subunits; these bridges are implicated in subunit movement. Contacts the tRNAs in the A and P-sites. This is Small ribosomal subunit protein uS13 from Mycoplasmopsis agalactiae (strain NCTC 10123 / CIP 59.7 / PG2) (Mycoplasma agalactiae).